The following is a 520-amino-acid chain: Dual specificity tyrosine-phosphorylation-regulated kinase 4 (520 aa).

The interval 1–32 is disordered; it reads MPASELKASEIPFHPSIKTQDPKAEEKSPKKQ. A Bipartite nuclear localization signal motif is present at residues 19–37; that stretch reads TQDPKAEEKSPKKQKVTLT. Residues 20 to 29 are compositionally biased toward basic and acidic residues; that stretch reads QDPKAEEKSP. The Protein kinase domain occupies 104 to 400; sequence YEVLETIGKG…PDQALKHAWI (297 aa). ATP contacts are provided by residues 110–118, Lys-133, and 183–186; these read IGKGSFGQV and FELL. Asp-230 (proton acceptor) is an active-site residue. Residue Tyr-264 is modified to Phosphotyrosine; by autocatalysis. The segment at 404–467 is disordered; sequence RNLKPQPRPQ…KHVQHSGDQQ (64 aa). Over residues 439-457 the composition is skewed to basic and acidic residues; sequence RKADEITKETTEKTKDSPT.

The protein belongs to the protein kinase superfamily. CMGC Ser/Thr protein kinase family. MNB/DYRK subfamily. The cofactor is Mg(2+). Autophosphorylation on Tyr-264 in the activation loop is required for kinase activity.

The protein resides in the cytoplasm. Its subcellular location is the nucleus. The enzyme catalyses L-seryl-[protein] + ATP = O-phospho-L-seryl-[protein] + ADP + H(+). It carries out the reaction L-threonyl-[protein] + ATP = O-phospho-L-threonyl-[protein] + ADP + H(+). It catalyses the reaction L-tyrosyl-[protein] + ATP = O-phospho-L-tyrosyl-[protein] + ADP + H(+). In terms of biological role, possible non-essential role in spermiogenesis. The protein is Dual specificity tyrosine-phosphorylation-regulated kinase 4 (DYRK4) of Homo sapiens (Human).